We begin with the raw amino-acid sequence, 204 residues long: Large ribosomal subunit protein eL15 (204 aa).

2 disordered regions span residues 71–91 (RKRP…GVNQ) and 159–182 (REMR…HYSQ). Over residues 159–174 (REMRGKTSAGRKHRGL) the composition is skewed to basic residues.

Belongs to the eukaryotic ribosomal protein eL15 family.

The protein is Large ribosomal subunit protein eL15 (RPL15) of Faxonius limosus (Spinycheek crayfish).